Here is a 582-residue protein sequence, read N- to C-terminus: Kelch-like protein diablo (582 aa).

Residues 1 to 22 form a disordered region; that stretch reads MGDVLISDRPPSPARLSHTSEK. A BTB domain is found at 41 to 108; that stretch reads CDVVINVSGR…CYTSHIVVEE (68 aa). Residues 143 to 245 form the BACK domain; that stretch reads CLGIRAFADT…SPKFLVGTVG (103 aa). Kelch repeat units follow at residues 292–338, 340–386, 387–433, 435–480, 482–527, and 528–574; these read VLFA…VLND, LYAV…VLDG, FLYA…VLGG, LYAI…VFNN, IYAV…VVNG, and QLYA…VMRA.

It functions in the pathway protein modification; protein ubiquitination. Probable substrate-specific adapter of an E3 ubiquitin-protein ligase complex which mediates the ubiquitination and subsequent proteasomal degradation of target proteins. May have a role in synapse differentiation and growth. The chain is Kelch-like protein diablo from Culex quinquefasciatus (Southern house mosquito).